A 255-amino-acid polypeptide reads, in one-letter code: uncharacterized protein (255 aa).

This is an uncharacterized protein from Methanocaldococcus jannaschii (strain ATCC 43067 / DSM 2661 / JAL-1 / JCM 10045 / NBRC 100440) (Methanococcus jannaschii).